The chain runs to 323 residues: ATP synthase gamma chain (323 aa).

Belongs to the ATPase gamma chain family. As to quaternary structure, F-type ATPases have 2 components, CF(1) - the catalytic core - and CF(0) - the membrane proton channel. CF(1) has five subunits: alpha(3), beta(3), gamma(1), delta(1), epsilon(1). CF(0) has three main subunits: a, b and c.

It localises to the cell inner membrane. Produces ATP from ADP in the presence of a proton gradient across the membrane. The gamma chain is believed to be important in regulating ATPase activity and the flow of protons through the CF(0) complex. This is ATP synthase gamma chain from Rickettsia rickettsii (strain Iowa).